The primary structure comprises 51 residues: uncharacterized protein (51 aa).

The tract at residues 1 to 24 is disordered; it reads MGGRFSGRVGIEKGGHPPSAADHS.

This is an uncharacterized protein from Escherichia coli.